A 673-amino-acid polypeptide reads, in one-letter code: DNA ligase (673 aa).

NAD(+)-binding positions include 38-42 (DSVYD), 87-88 (SL), and glutamate 119. Lysine 121 serves as the catalytic N6-AMP-lysine intermediate. Arginine 142, glutamate 179, lysine 296, and lysine 320 together coordinate NAD(+). Residues cysteine 414, cysteine 417, cysteine 432, and cysteine 438 each coordinate Zn(2+). Residues 595–673 (VVKSEIAGKT…EEAFLKLLKS (79 aa)) form the BRCT domain.

This sequence belongs to the NAD-dependent DNA ligase family. LigA subfamily. Requires Mg(2+) as cofactor. Mn(2+) is required as a cofactor.

The enzyme catalyses NAD(+) + (deoxyribonucleotide)n-3'-hydroxyl + 5'-phospho-(deoxyribonucleotide)m = (deoxyribonucleotide)n+m + AMP + beta-nicotinamide D-nucleotide.. Its function is as follows. DNA ligase that catalyzes the formation of phosphodiester linkages between 5'-phosphoryl and 3'-hydroxyl groups in double-stranded DNA using NAD as a coenzyme and as the energy source for the reaction. It is essential for DNA replication and repair of damaged DNA. This is DNA ligase from Coxiella burnetii (strain CbuK_Q154) (Coxiella burnetii (strain Q154)).